A 148-amino-acid polypeptide reads, in one-letter code: Large ribosomal subunit protein bL9 (148 aa).

It belongs to the bacterial ribosomal protein bL9 family.

Binds to the 23S rRNA. This chain is Large ribosomal subunit protein bL9, found in Pseudomonas syringae pv. tomato (strain ATCC BAA-871 / DC3000).